Consider the following 67-residue polypeptide: DNA-directed RNA polymerase subunit omega (67 aa).

The protein belongs to the RNA polymerase subunit omega family. In terms of assembly, the RNAP catalytic core consists of 2 alpha, 1 beta, 1 beta' and 1 omega subunit. When a sigma factor is associated with the core the holoenzyme is formed, which can initiate transcription.

The catalysed reaction is RNA(n) + a ribonucleoside 5'-triphosphate = RNA(n+1) + diphosphate. Functionally, promotes RNA polymerase assembly. Latches the N- and C-terminal regions of the beta' subunit thereby facilitating its interaction with the beta and alpha subunits. This is DNA-directed RNA polymerase subunit omega from Cupriavidus metallidurans (strain ATCC 43123 / DSM 2839 / NBRC 102507 / CH34) (Ralstonia metallidurans).